We begin with the raw amino-acid sequence, 515 residues long: Dimethylnonatriene synthase (515 aa).

The helical transmembrane segment at 3 to 23 threads the bilayer; the sequence is FLFSTLQLSLFSLALVIFGYI. Residue His219 participates in substrate binding. Lys252 is covalently cross-linked (Glycyl lysine isopeptide (Lys-Gly) (interchain with G-Cter in ubiquitin)). Cys452 serves as a coordination point for heme.

This sequence belongs to the cytochrome P450 family. The cofactor is heme. Expressed in stems, flower peduncles, receptacle of developing and mature flowers and in stigma of mature opening flower buds.

It is found in the membrane. It catalyses the reaction (3S,6E)-nerolidol + reduced [NADPH--hemoprotein reductase] + O2 = (3E)-4,8-dimethylnona-1,3,7-triene + but-3-en-2-one + oxidized [NADPH--hemoprotein reductase] + 2 H2O + H(+). The catalysed reaction is (6E,10E)-geranyllinalool + reduced [NADPH--hemoprotein reductase] + O2 = (3E,7E)-4,8,12-trimethyltrideca 1,3,7,11-tetraene + but-3-en-2-one + oxidized [NADPH--hemoprotein reductase] + 2 H2O + H(+). It functions in the pathway secondary metabolite biosynthesis; terpenoid biosynthesis. Functionally, involved in the biosynthesis of homoterpenes, attractants of herbivores parasitoids and predators (e.g. predatory mites and parasitoid wasps). Catalyzes the conversion of the C20 (E,E)-geranyllinalool to C16-homoterpene 4,8,12-trimethyltrideca-1,3,7,11-tetraene (TMTT) of the C15 (E)-nerolidol to C11-homoterpene (E)-4,8-dimethyl-1,3,7-nonatriene (DMNT); these volatile compounds are produced upon insect herbivore attack and emitted from flowers and vegetative tissues during herbivore feeding. Required during resistance responses to the fungus Alternaria brassicae. Prevents oviposition of the phloem-feeding insect cabbage whitefly (Aleyrodes proletella). The chain is Dimethylnonatriene synthase from Arabidopsis thaliana (Mouse-ear cress).